The chain runs to 100 residues: Large ribosomal subunit protein uL23 (100 aa).

The protein belongs to the universal ribosomal protein uL23 family. In terms of assembly, part of the 50S ribosomal subunit. Contacts protein L29, and trigger factor when it is bound to the ribosome.

Its function is as follows. One of the early assembly proteins it binds 23S rRNA. One of the proteins that surrounds the polypeptide exit tunnel on the outside of the ribosome. Forms the main docking site for trigger factor binding to the ribosome. This chain is Large ribosomal subunit protein uL23, found in Aliivibrio fischeri (strain MJ11) (Vibrio fischeri).